A 195-amino-acid chain; its full sequence is UDP-N-acetylbacillosamine N-acetyltransferase (195 aa).

Residues 13-15, 35-36, and G56 contribute to the substrate site; these read SGH and DD. H125 acts as the Proton acceptor in catalysis. Residues H134, I155, and G173 each contribute to the acetyl-CoA site.

It belongs to the transferase hexapeptide repeat family. In terms of assembly, homotrimer.

The catalysed reaction is UDP-N-acetylbacillosamine + acetyl-CoA = UDP-N,N'-diacetylbacillosamine + CoA + H(+). Its pathway is protein modification; protein glycosylation. Functionally, acetyltransferase that modifies the UDP-4-amino-sugar to form UDP-N,N'-diacetylbacillosamine in the N-linked protein glycosylation pathway. This chain is UDP-N-acetylbacillosamine N-acetyltransferase (pglD), found in Campylobacter jejuni subsp. jejuni serotype O:2 (strain ATCC 700819 / NCTC 11168).